The chain runs to 475 residues: Glutamate--tRNA ligase 2 (475 aa).

The short motif at proline 9 to serine 19 is the 'HIGH' region element. A 'KMSKS' region motif is present at residues lysine 238–arginine 242. Position 241 (lysine 241) interacts with ATP.

Belongs to the class-I aminoacyl-tRNA synthetase family. Glutamate--tRNA ligase type 1 subfamily. Monomer.

It is found in the cytoplasm. It carries out the reaction tRNA(Glu) + L-glutamate + ATP = L-glutamyl-tRNA(Glu) + AMP + diphosphate. Functionally, catalyzes the attachment of glutamate to tRNA(Glu) in a two-step reaction: glutamate is first activated by ATP to form Glu-AMP and then transferred to the acceptor end of tRNA(Glu). The sequence is that of Glutamate--tRNA ligase 2 from Bartonella quintana (strain Toulouse) (Rochalimaea quintana).